The chain runs to 293 residues: 4-diphosphocytidyl-2-C-methyl-D-erythritol kinase (293 aa).

Lys-16 is an active-site residue. 99–109 (PMGAGLGGGSS) contributes to the ATP binding site. Residue Asp-141 is part of the active site.

The protein belongs to the GHMP kinase family. IspE subfamily.

It catalyses the reaction 4-CDP-2-C-methyl-D-erythritol + ATP = 4-CDP-2-C-methyl-D-erythritol 2-phosphate + ADP + H(+). Its pathway is isoprenoid biosynthesis; isopentenyl diphosphate biosynthesis via DXP pathway; isopentenyl diphosphate from 1-deoxy-D-xylulose 5-phosphate: step 3/6. In terms of biological role, catalyzes the phosphorylation of the position 2 hydroxy group of 4-diphosphocytidyl-2C-methyl-D-erythritol. The sequence is that of 4-diphosphocytidyl-2-C-methyl-D-erythritol kinase from Burkholderia lata (strain ATCC 17760 / DSM 23089 / LMG 22485 / NCIMB 9086 / R18194 / 383).